A 1233-amino-acid chain; its full sequence is NACHT, LRR and PYD domains-containing protein 1b allele 1 (1233 aa).

Residues 1–22 form a disordered region; that stretch reads MEESPPKQKSNTKVAQHEGQQD. In terms of domain architecture, NACHT spans 126–435; sequence QLVIIEGAAG…EFFAAISCIL (310 aa). 132-139 contributes to the ATP binding site; it reads GAAGIGKS. 2 LRR repeats span residues 627–647 and 684–704; these read NLEG…QSLC and SLTE…RMLC. A ZU5 region spans residues 850 to 983; sequence FWGPIGPVAT…GYTVLKNPSF (134 aa). An FIIND domain is found at 850-1133; sequence FWGPIGPVAT…LRPALPRIAQ (284 aa). The interval 984–1133 is UPA; sequence SPMGVVLRII…LRPALPRIAQ (150 aa). The CARD domain maps to 1143–1226; sequence HFMDQHREQL…HLVMDLLEKS (84 aa).

This sequence belongs to the NLRP family. Interacts with DPP9; leading to inhibit activation of the inflammasome. DPP9 acts via formation of a ternary complex, composed of a DPP9 homodimer, one full-length Nlrp1b protein, and one cleaved C-terminus of Nlrp1b (NACHT, LRR and PYD domains-containing protein 1b, C-terminus). Interacts with DPP8; leading to inhibit activation of the inflammasome, probably via formation of a ternary complex with DPP8. Interacts (via LRR repeats) with BCL2 and BCL2L1 (via the loop between motifs BH4 and BH3). Interacts with NOD2; this interaction may increase IL1B release. Interacts with EIF2AK2/PKR; this interaction requires EIF2AK2 activity, is accompanied by EIF2AK2 autophosphorylation and promotes inflammasome assembly in response to B.anthracis lethal toxin. Interacts with MEFV; this interaction targets Nlrp1b to degradation by autophagy, hence preventing excessive IL1B- and IL18-mediated inflammation. As to quaternary structure, interacts with the C-terminal part of Nlrp1b (NACHT, LRR and PYD domains-containing protein 1b, C-terminus) in absence of pathogens and other damage-associated signals. In terms of assembly, interacts with the N-terminal part of Nlrp1b (NACHT, LRR and PYD domains-containing protein 1b, N-terminus) in absence of pathogens and other damage-associated signals. Homomultimer; forms the Nlrp1b inflammasome polymeric complex, a filament composed of homopolymers of this form in response to pathogens and other damage-associated signals. The Nlrp1b inflammasome polymeric complex directly recruits pro-caspase-1 (proCASP1) independently of PYCARD/ASC. Interacts (via CARD domain) with CASP1 (via CARD domain); leading to CASP1 activation. In terms of processing, autocatalytically cleaved. Autocatalytic cleavage in FIIND region occurs constitutively, prior to activation signals, and is required for inflammasome activity (IL1B release), possibly by facilitating CASP1 binding. Both N- and C-terminal parts remain associated non-covalently. Post-translationally, ubiquitinated by UBR2, a component of the N-end rule pathway in response to pathogens and other damage-associated signals, leading to its degradation by the proteasome and subsequent release of the cleaved C-terminal part of the protein (NACHT, LRR and PYD domains-containing protein 1b, C-terminus), which polymerizes and forms the Nlrp1b inflammasome. (Microbial infection) Cleavage by B.anthracis lethal toxin (LT) endopeptidase promotes ubiquitination and degradation of the N-terminal part, releasing the cleaved C-terminal part of the protein (NACHT, LRR and PYD domains-containing protein 1b, C-terminus), which polymerizes and forms the Nlrp1b inflammasome. In terms of processing, (Microbial infection) Ubiquitinated by S.flexneri IpaH7.8, leading to its degradation by the proteasome and subsequent release of the cleaved C-terminal part of the protein (NACHT, LRR and PYD domains-containing protein 1b, C-terminus), which polymerizes and forms the Nlrp1b inflammasome. Widely expressed, including in macrophages.

The protein resides in the cytoplasm. The protein localises to the cytosol. It localises to the membrane. Its subcellular location is the inflammasome. Its activity is regulated as follows. Activated by cleavage by B.anthracis lethal toxin (LT) endopeptidase: cleavage by LT promotes ubiquitination and degradation of the N-terminal part, releasing the cleaved C-terminal part of the protein (NACHT, LRR and PYD domains-containing protein 1b, C-terminus), which polymerizes and forms the Nlrp1b inflammasome. Activated by S.flexneri IpaH7.8, an E3 ubiquitin ligase that mediates ubiquitination and degradation of the N-terminal part, releasing the cleaved C-terminal part of the protein, which polymerizes and forms the Nlrp1b inflammasome. Nlrp1b inflammasome is inhibited by DPP8 and DPP9, which sequester the C-terminal fragment of Nlrp1b (NACHT, LRR and PYD domains-containing protein 1b, C-terminus) in a ternary complex, thereby preventing Nlrp1b oligomerization and activation. Nlrp1b inflammasome is activated by Val-boroPro (Talabostat, PT-100), an inhibitor of dipeptidyl peptidases DPP8 and DPP9. Val-boroPro relieves inhibition of DPP8 and/or DPP9 by promoting disruption of the ternary complex, releasing its C-terminal part from autoinhibition. Activated by metabolic inhibitors, such as 2-deoxy-D-glucose and sodium azide, by nutrient deprivation and hypoxia, possibly due to a decrease in cytosolic ATP. Also activated by Toxoplasma gondii. Not activated by muramyl dipeptide, nor by full-length bacterial peptidoglycan. Contrary to its human ortholog, not activated by positive-strand RNA virus such as Semliki Forrest virus or long dsRNA. Functionally, acts as the sensor component of the Nlrp1b inflammasome, which mediates inflammasome activation in response to various pathogen-associated signals, leading to subsequent pyroptosis. Inflammasomes are supramolecular complexes that assemble in the cytosol in response to pathogens and other damage-associated signals and play critical roles in innate immunity and inflammation. Acts as a recognition receptor (PRR): recognizes specific pathogens and other damage-associated signals, such as B.anthracis lethal toxin (LT) or Val-boroPro inhibitor, and mediates the formation of the inflammasome polymeric complex. In response to pathogen-associated signals, the N-terminal part of Nlrp1b is degraded by the proteasome, releasing the cleaved C-terminal part of the protein (NACHT, LRR and PYD domains-containing protein 1b, C-terminus), which polymerizes to initiate the formation of the inflammasome complex: the inflammasome directly recruits pro-caspase-1 (proCASP1) independently of PYCARD/ASC and promotes caspase-1 (CASP1) activation, which subsequently cleaves and activates inflammatory cytokines IL1B and IL18 and gasdermin-D (GSDMD), leading to pyroptosis. In the absence of GSDMD expression, the Nlrp1b inflammasome is able to recruit and activate CASP8, leading to activation of gasdermin-E (GSDME). Activation of Nlrp1b inflammasome is also required for HMGB1 secretion; the active cytokines and HMGB1 stimulate inflammatory responses. Primary mediator of macrophage susceptibility to B.anthracis LT: in response to B.anthracis infection, macrophages and dendritic cells release IL1B and undergo pyroptosis. This early inflammatory response to the toxin increases resistance to infection by B.anthracis spores. Its function is as follows. Constitutes the precursor of the Nlrp1b inflammasome, which mediates autoproteolytic processing within the FIIND domain to generate the N-terminal and C-terminal parts, which are associated non-covalently in absence of pathogens and other damage-associated signals. Regulatory part that prevents formation of the Nlrp1b inflammasome: in absence of pathogens and other damage-associated signals, interacts with the C-terminal part of Nlrp1b (NACHT, LRR and PYD domains-containing protein 1b, C-terminus), preventing activation of the Nlrp1b inflammasome. In response to pathogen-associated signals, this part is ubiquitinated by the N-end rule pathway and degraded by the proteasome, releasing the cleaved C-terminal part of the protein, which polymerizes and forms the Nlrp1b inflammasome. In terms of biological role, constitutes the active part of the Nlrp1b inflammasome. In absence of pathogens and other damage-associated signals, interacts with the N-terminal part of Nlrp1b (NACHT, LRR and PYD domains-containing protein 1b, N-terminus), preventing activation of the Nlrp1b inflammasome. In response to pathogen-associated signals, the N-terminal part of Nlrp1b is degraded by the proteasome, releasing this form, which polymerizes to form the Nlrp1b inflammasome complex: the Nlrp1b inflammasome complex then directly recruits pro-caspase-1 (proCASP1) and promotes caspase-1 (CASP1) activation, leading to gasdermin-D (GSDMD) cleavage and subsequent pyroptosis. This Mus musculus (Mouse) protein is NACHT, LRR and PYD domains-containing protein 1b allele 1.